Reading from the N-terminus, the 168-residue chain is Thiol peroxidase (168 aa).

In terms of domain architecture, Thioredoxin spans 19–168 (PQAGSKAQAF…YDAALNVLKA (150 aa)). The active-site Cysteine sulfenic acid (-SOH) intermediate is the cysteine 61. A disulfide bridge connects residues cysteine 61 and cysteine 95.

It belongs to the peroxiredoxin family. Tpx subfamily. In terms of assembly, homodimer.

It carries out the reaction a hydroperoxide + [thioredoxin]-dithiol = an alcohol + [thioredoxin]-disulfide + H2O. Its function is as follows. Thiol-specific peroxidase that catalyzes the reduction of hydrogen peroxide and organic hydroperoxides to water and alcohols, respectively. Plays a role in cell protection against oxidative stress by detoxifying peroxides. The chain is Thiol peroxidase from Salmonella typhi.